Consider the following 331-residue polypeptide: High-affinity nickel-transport protein NixA (331 aa).

The next 7 membrane-spanning stretches (helical) occupy residues 3–23 (LWFPYFLAIVFLHALGLALLF), 77–97 (MGHSSVVILMTIISAFAIAWA), 110–130 (VVGTLVSGLFLLIIGLLNAII), 184–204 (PVGFLFGLGFDTASEIALLAL), 213–233 (VVGMLSLPILFAAGMSLFDTL), 259–279 (ITALSVFIALFIGLIELFQVI), and 302–322 (DLGYYLVGLFVIAFLGSFFLW).

Belongs to the NiCoT transporter (TC 2.A.52) family.

The protein resides in the cell inner membrane. Its function is as follows. High-affinity nickel intake protein. Imports nickel ions in an energy-dependent fashion. Necessary for the expression of catalytically active urease. The protein is High-affinity nickel-transport protein NixA (nixA) of Helicobacter pylori (strain J99 / ATCC 700824) (Campylobacter pylori J99).